A 389-amino-acid polypeptide reads, in one-letter code: Phosphoribosylformylglycinamidine cyclo-ligase, chloroplastic (389 aa).

The N-terminal 58 residues, 1–58, are a transit peptide targeting the chloroplast; that stretch reads MEARILQSSSSCYSSLYAVNRSRFSSVSSPKPFSVSFAQTTRTRTRVLSMSKKDGRTD. Positions 46 to 65 are disordered; sequence RVLSMSKKDGRTDKDDDTDS.

It belongs to the AIR synthase family.

Its subcellular location is the plastid. It localises to the chloroplast. It carries out the reaction 2-formamido-N(1)-(5-O-phospho-beta-D-ribosyl)acetamidine + ATP = 5-amino-1-(5-phospho-beta-D-ribosyl)imidazole + ADP + phosphate + H(+). It participates in purine metabolism; IMP biosynthesis via de novo pathway; 5-amino-1-(5-phospho-D-ribosyl)imidazole from N(2)-formyl-N(1)-(5-phospho-D-ribosyl)glycinamide: step 2/2. The protein is Phosphoribosylformylglycinamidine cyclo-ligase, chloroplastic (PUR5) of Arabidopsis thaliana (Mouse-ear cress).